A 443-amino-acid polypeptide reads, in one-letter code: Citrate transporter CitP (443 aa).

13 helical membrane-spanning segments follow: residues 27-47 (ISGIGLVRYAFMAVLLIIAIS), 59-79 (IFALVLMGHVFYYLGAHLPIF), 83-103 (LGGGSVFTILLTAILVATNVM), 114-134 (FINGMDFLGLYIVSLIASSLF), 151-171 (VAFISMALTAVVIGIVGVIIG), 177-197 (AILYIAMPIMAGGVGAGIVPL), 209-229 (SAGILSKLFPTVILGNLLAII), 268-288 (YVQLGVGLIIAVMFFMIGTML), 294-314 (GINAYAFIILSIVLTKAFGLL), 322-342 (VIMFGQVIVKNMTHALLAGVG), 350-370 (VLLAALSWQFVVLCLVSIVAI), 388-410 (AAITAGLANNSMGGTGNVAVLAA), and 422-442 (MGNRIGGALILVVAGILVTFM).

Belongs to the 2-hydroxycarboxylate transporter (2-HCT) (TC 2.A.24) family.

It is found in the cell membrane. The enzyme catalyses (R)-lactate(in) + citrate(out) = (R)-lactate(out) + citrate(in). It carries out the reaction (S)-lactate(in) + citrate(out) = (S)-lactate(out) + citrate(in). The catalysed reaction is citrate(in) + H(+)(in) = citrate(out) + H(+)(out). Its activity is regulated as follows. Uptake of citrate is not affected by the absence or presence of Na(+) up to 25 mM and is increasingly inhibited by increasing Mg(2+) concentrations. Functionally, secondary transporter involved in citrate metabolism. During cometabolism of citrate and glucose, catalyzes the uptake of divalent citrate into the cell coupled to the exit of monovalent lactate, a product of citrate fermentation during citrate-glucose cometabolism (precursor/product exchange). The citrate/lactate exchange is electrogenic and results in the generation of a membrane potential. In the absence of glucose, i.e. when no lactate is produced, CitP catalyzes the proton-dependent transport of citrate and malate. Transports the divalent form of citrate and malate with the concomitant uptake of one proton, therefore translocating a single unit of negative charge across the membrane. In vitro, transports a range of substrates that contain the 2-hydroxycarboxylate motif, HO-CR(2)-COO(-), with a preference for malate, citrate and monovalent 2-hydroxyisobutyrate. Modification of the OH or the COO(-) groups of the 2-hydroxycarboxylate motif drastically reduces the affinity of the transporter for the substrates, indicating their relevance in substrate recognition. Significant activity is also observed with some 2-oxocarboxylates and a 3-hydroxycarboxylate. The chain is Citrate transporter CitP from Leuconostoc mesenteroides subsp. mesenteroides.